We begin with the raw amino-acid sequence, 169 residues long: Vimentin-type intermediate filament-associated coiled-coil protein (169 aa).

The stretch at 7 to 89 forms a coiled coil; it reads LQIREANAHL…VHSLQATVHQ (83 aa). The span at 126–135 shows a compositional bias: low complexity; that stretch reads RLGPLPASDP. The disordered stretch occupies residues 126–169; the sequence is RLGPLPASDPGHPPPGGPGPPLDNSTGEEADRDHLQPAVFGTTV. Residues 136–146 show a composition bias toward pro residues; the sequence is GHPPPGGPGPP.

The protein resides in the cytoplasm. This is Vimentin-type intermediate filament-associated coiled-coil protein (VMAC) from Homo sapiens (Human).